A 273-amino-acid polypeptide reads, in one-letter code: 3-methyl-2-oxobutanoate hydroxymethyltransferase 2 (273 aa).

Mg(2+)-binding residues include aspartate 50 and aspartate 89. 3-methyl-2-oxobutanoate contacts are provided by residues 50 to 51 (DS), aspartate 89, and lysine 119. Residue glutamate 121 coordinates Mg(2+). Catalysis depends on glutamate 188, which acts as the Proton acceptor.

This sequence belongs to the PanB family. As to quaternary structure, homodecamer; pentamer of dimers. Mg(2+) is required as a cofactor.

The protein localises to the cytoplasm. It catalyses the reaction 3-methyl-2-oxobutanoate + (6R)-5,10-methylene-5,6,7,8-tetrahydrofolate + H2O = 2-dehydropantoate + (6S)-5,6,7,8-tetrahydrofolate. It participates in cofactor biosynthesis; (R)-pantothenate biosynthesis; (R)-pantoate from 3-methyl-2-oxobutanoate: step 1/2. Catalyzes the reversible reaction in which hydroxymethyl group from 5,10-methylenetetrahydrofolate is transferred onto alpha-ketoisovalerate to form ketopantoate. The protein is 3-methyl-2-oxobutanoate hydroxymethyltransferase 2 of Zymomonas mobilis subsp. mobilis (strain ATCC 31821 / ZM4 / CP4).